The primary structure comprises 59 residues: Ribosome biogenesis protein Nop10 (59 aa).

Belongs to the NOP10 family.

Its function is as follows. Involved in ribosome biogenesis; more specifically in 18S rRNA pseudouridylation and in cleavage of pre-rRNA. This chain is Ribosome biogenesis protein Nop10, found in Thermococcus kodakarensis (strain ATCC BAA-918 / JCM 12380 / KOD1) (Pyrococcus kodakaraensis (strain KOD1)).